Here is a 247-residue protein sequence, read N- to C-terminus: Protein McbF (247 aa).

Positions leucine 6–leucine 234 constitute an ABC transporter domain. Glycine 40–threonine 47 is a binding site for ATP.

It belongs to the ABC transporter superfamily.

In terms of biological role, together with two further proteins McbE and McbG this protein causes immunity to the peptide antibiotic microcin B17, which inhibits DNA replication in enterobacteriaceae. Immunity is determined by two different mechanisms. McbE is involved in the production of extracellular MccB17 and, in a complex with mcbf it also serves as 'pump' for the export of active MccB17 from the cytoplasm to the periplasmic space. This is Protein McbF (mcbF) from Escherichia coli.